The primary structure comprises 607 residues: Ceramide kinase (607 aa).

The 224-residue stretch at 135 to 358 (DRPKSLMVFV…LDIAQVVRWK (224 aa)) folds into the DAGKc domain. ATP contacts are provided by residues 145–149 (HPLCG), T176, and 205–211 (GDGLFNE). 204–207 (GGDG) provides a ligand contact to substrate. D206 serves as the catalytic Proton donor/acceptor. The disordered stretch occupies residues 247 to 297 (NDLSNSELTGDDANAISGSSNTPDDHEPLLSTTRSTGLDISSSDSSDEPCN). Residues 276–286 (LSTTRSTGLDI) are compositionally biased toward polar residues. An ATP-binding site is contributed by S320. Positions 454 to 461 (CRTNCLIC) match the CXXXCXXC motif.

Requires Ca(2+) as cofactor. It depends on Mg(2+) as a cofactor. Highly expressed in leaves and at lower levels in stems.

It catalyses the reaction an N-acylsphing-4-enine + ATP = an N-acylsphing-4-enine 1-phosphate + ADP + H(+). Functionally, catalyzes specifically the phosphorylation of ceramide to form ceramide 1-phosphate. Possesses activity on ceramide analog (C6 synthetic ceramide) in vitro. Ceramide is a critical sphingolipid metabolite that induces programmed cell death (PCD) in plants and ceramide-1-phosphate has a PCD suppressive effect. Thus, ceramide phosphorylation plays a role in the modulation of PCD and CERK activity is crucial for the maintenance of cell viability. This Oryza sativa subsp. japonica (Rice) protein is Ceramide kinase (CERK).